A 120-amino-acid polypeptide reads, in one-letter code: Holo-[acyl-carrier-protein] synthase (120 aa).

Residues D8 and E60 each contribute to the Mg(2+) site.

This sequence belongs to the P-Pant transferase superfamily. AcpS family. The cofactor is Mg(2+).

Its subcellular location is the cytoplasm. The catalysed reaction is apo-[ACP] + CoA = holo-[ACP] + adenosine 3',5'-bisphosphate + H(+). Functionally, transfers the 4'-phosphopantetheine moiety from coenzyme A to a Ser of acyl-carrier-protein. The protein is Holo-[acyl-carrier-protein] synthase of Anaplasma marginale (strain St. Maries).